The following is a 166-amino-acid chain: Phosphopantetheine adenylyltransferase (166 aa).

Position 10 (Ser-10) interacts with substrate. ATP-binding positions include 10-11 (SF) and His-18. Substrate contacts are provided by Lys-42, Ala-79, and Arg-93. ATP contacts are provided by residues 94–96 (GLR), Glu-104, and 129–135 (VRPITAT).

It belongs to the bacterial CoaD family. Homohexamer. Mg(2+) serves as cofactor.

The protein localises to the cytoplasm. The catalysed reaction is (R)-4'-phosphopantetheine + ATP + H(+) = 3'-dephospho-CoA + diphosphate. Its pathway is cofactor biosynthesis; coenzyme A biosynthesis; CoA from (R)-pantothenate: step 4/5. Reversibly transfers an adenylyl group from ATP to 4'-phosphopantetheine, yielding dephospho-CoA (dPCoA) and pyrophosphate. This chain is Phosphopantetheine adenylyltransferase, found in Methylobacterium sp. (strain 4-46).